The following is a 490-amino-acid chain: Probable cytosol aminopeptidase (490 aa).

Residues K256 and D261 each coordinate Mn(2+). The active site involves K268. Residues D280, D340, and E342 each contribute to the Mn(2+) site. R344 is an active-site residue.

It belongs to the peptidase M17 family. Requires Mn(2+) as cofactor.

It is found in the cytoplasm. It catalyses the reaction Release of an N-terminal amino acid, Xaa-|-Yaa-, in which Xaa is preferably Leu, but may be other amino acids including Pro although not Arg or Lys, and Yaa may be Pro. Amino acid amides and methyl esters are also readily hydrolyzed, but rates on arylamides are exceedingly low.. The enzyme catalyses Release of an N-terminal amino acid, preferentially leucine, but not glutamic or aspartic acids.. Presumably involved in the processing and regular turnover of intracellular proteins. Catalyzes the removal of unsubstituted N-terminal amino acids from various peptides. The protein is Probable cytosol aminopeptidase of Synechococcus sp. (strain CC9902).